A 550-amino-acid chain; its full sequence is Chaperonin GroEL (550 aa).

Residues 29–32, Lys-50, 86–90, Gly-417, and Asp-499 each bind ATP; these read TAGP and DGTTT.

It belongs to the chaperonin (HSP60) family. As to quaternary structure, forms a cylinder of 14 subunits composed of two heptameric rings stacked back-to-back. Interacts with the co-chaperonin GroES.

It localises to the cytoplasm. It carries out the reaction ATP + H2O + a folded polypeptide = ADP + phosphate + an unfolded polypeptide.. Its function is as follows. Together with its co-chaperonin GroES, plays an essential role in assisting protein folding. The GroEL-GroES system forms a nano-cage that allows encapsulation of the non-native substrate proteins and provides a physical environment optimized to promote and accelerate protein folding. This chain is Chaperonin GroEL, found in Ehrlichia chaffeensis.